Consider the following 239-residue polypeptide: MRLDKLLANSGYGSRKEVKAVVKAGAVMIDGKPAKDVKEHVDPDTQEVTVYGEPVDYREFIYLMMNKPQGVLSATEDSRQQTVVDLLTPEEMRFEPFPAGRLDKDTEGFLLLTNDGQLAHRLLSPKKHVPKTYEVHLKSQISREDISDLETGVYIEGGYKTKPAKAEIKTNDSGNTVIYLTITEGKYHQVKQMAKAVGNEVVYLKRLSMGRVSLDPALAPGEYRELTEEELHLLNEPQA.

An S4 RNA-binding domain is found at 1–65 (MRLDKLLANS…DYREFIYLMM (65 aa)). Asp103 serves as the catalytic Nucleophile.

Belongs to the pseudouridine synthase RsuA family.

The catalysed reaction is a uridine in RNA = a pseudouridine in RNA. This is an uncharacterized protein from Bacillus subtilis (strain 168).